Reading from the N-terminus, the 370-residue chain is Chaperone protein DnaJ (370 aa).

The region spanning 5-70 (DYYEVLGVSK…EKRSMYDRMG (66 aa)) is the J domain. The CR-type zinc finger occupies 134-212 (GVKKTITFTA…CHGSGVADRQ (79 aa)). Zn(2+)-binding residues include cysteine 147, cysteine 150, cysteine 164, cysteine 167, cysteine 186, cysteine 189, cysteine 200, and cysteine 203. CXXCXGXG motif repeat units follow at residues 147–154 (CDVCDGKG), 164–171 (CKTCHGSG), 186–193 (CGTCRGQG), and 200–207 (CHACHGSG). A disordered region spans residues 351–370 (DGEDSASSPKKKSFFDRLFD).

This sequence belongs to the DnaJ family. In terms of assembly, homodimer. Zn(2+) serves as cofactor.

It is found in the cytoplasm. Functionally, participates actively in the response to hyperosmotic and heat shock by preventing the aggregation of stress-denatured proteins and by disaggregating proteins, also in an autonomous, DnaK-independent fashion. Unfolded proteins bind initially to DnaJ; upon interaction with the DnaJ-bound protein, DnaK hydrolyzes its bound ATP, resulting in the formation of a stable complex. GrpE releases ADP from DnaK; ATP binding to DnaK triggers the release of the substrate protein, thus completing the reaction cycle. Several rounds of ATP-dependent interactions between DnaJ, DnaK and GrpE are required for fully efficient folding. Also involved, together with DnaK and GrpE, in the DNA replication of plasmids through activation of initiation proteins. The sequence is that of Chaperone protein DnaJ from Acinetobacter baumannii (strain AB0057).